Here is a 57-residue protein sequence, read N- to C-terminus: DELTA-limacoditoxin(2)-Dv11 (57 aa).

Positions 1-24 (MKFAKTFLLLFVVLLLLSIVMAEP) are cleaved as a signal peptide.

The protein belongs to the limacoditoxin-2 (cecropin-like) family. In terms of tissue distribution, expressed by the venom secretory cell of the spine. The spine is a cuticular structure containing a single large nucleated venom-secreting cell at its base. It is an independent unit capable of producing, storing and injecting venom. On the back of D.vulnerans caterpillars, spines are grouped together by 50 to 100 to form scoli, of which there are eight in D.vulnerans.

The protein resides in the secreted. In terms of biological role, peptide that induces pain in mammals and has insecticidal, antibacterial and antiparasitic activities. Induces partially reversible paralysis in D.melanogaster when tested at high doses. Shows a moderate antiparasitic activity against the major pathogenic nematode of ruminants (H.contortus, EC(50)=30.5 uM). Has potent or moderate antibacterial activities against A.baumannii (MIC&lt;0.25 ug/mL) and S.aureus (MIC=16 ug/mL). Has no activity on the other bacteria tested, nor on the fungus C.albicans. Strongly induces the increase of intracellular calcium in mice DRG neurons, which is a proxy for neuronal activation that would occur during nociception. This increase is due to influx of extracellular calcium, suggesting that the peptide forms pore or channel in neuronal cell membranes. In addition, intraplantar injection in mice provokes nocifensive behavior, suggesting a pain-inducing activity. This is DELTA-limacoditoxin(2)-Dv11 from Doratifera vulnerans (Mottled cup moth).